The primary structure comprises 266 residues: Undecaprenyl-diphosphatase (266 aa).

8 consecutive transmembrane segments (helical) span residues 1 to 21 (MDTLQVIILALIQGLTEFLPI), 39 to 59 (QGLSFDVAVHIGSLAAVVIYF), 83 to 103 (SKLAWWIILATIPAIGVGFTA), 111 to 131 (LRGPGVIAITTVIFGLLLWFA), 149 to 169 (ALLIGVAQALALIPGTSRSGI), 183 to 203 (AAARFSFLMSIPVILGAALLM), 218 to 238 (ALALGSILSFIAAYACIYFFL), and 246 to 266 (MTPFVIYRIALGVFLCGFIYL).

It belongs to the UppP family.

The protein resides in the cell inner membrane. The enzyme catalyses di-trans,octa-cis-undecaprenyl diphosphate + H2O = di-trans,octa-cis-undecaprenyl phosphate + phosphate + H(+). Catalyzes the dephosphorylation of undecaprenyl diphosphate (UPP). Confers resistance to bacitracin. The protein is Undecaprenyl-diphosphatase of Shewanella amazonensis (strain ATCC BAA-1098 / SB2B).